The following is a 746-amino-acid chain: MLGAPSPRRLADVLAVTAGLVASVRAASPISVSGKSFALNGDNVSYRFHVDDDSKDLIGDHFGGPATEDGVFPPIIGPIQGWVDLIGRQRREFPDLGRGDFRTPAVHIRQAAGYTVSDFQYKSHRVVEGKPALRGLPSTFGDAGDVSTLVVHMYDNYSSVAADLTYSIFPKYDAIVRSVNITNMGKGNITIEKLASLSVDLPYEDFDMLELKGDWAREGKRLRRKVDYGSQGFGSTTGYSSHLHNPFFSLITPTTTESQGEAWGFSLVYTGSFSVEVEKGSQGLTRAAIGVNPYQLSWPLGPGETFSSPEAVAVFSTTGVGGMSRKFHNLYRKHLIKSKFATQMHPVLLNSWEGLGFDYNDTTILHLAQESADLGIKLFVLDDGWFGVKHPRVSDNAGLGDWEANPKRFPQGLPDFISDVTKLKVANSSDHLQFGLWFEPEMVNPNSTLYMEHPDWAIHAGSYPRTLTRNQLVLNVALPEVQDFIIESLSNILSNASISYVKWDNNRGIHEAPYPGLDYAYMLGLYRVFDTLSSKFPNVRWEGCASGGGRFDPGVLQYFPHIWTSDDTDAVERIAIQFGTSLVYPPSAMGAHVSAVPNGQTQRTTSIAFRAHVAMMGGSFGFELTPAEMPEDDKAQIPGIIALAEKVNPIVVKGDMWRLSLPEESNWPAALFISQDGSQAVLFYFQIRANINNAWPVLRLQGLDASAKYKIDGNQTFSGATLMNIGLQYQFNGDYDSKVVFLEKQT.

The first 26 residues, 1–26 (MLGAPSPRRLADVLAVTAGLVASVRA), serve as a signal peptide directing secretion. Residues N43, N156, N180, N188, N360, N427, N446, and N495 are each glycosylated (N-linked (GlcNAc...) asparagine). The active-site Nucleophile is the D504. D566 (proton donor) is an active-site residue. N714 carries an N-linked (GlcNAc...) asparagine glycan.

It belongs to the glycosyl hydrolase 27 family.

Its subcellular location is the secreted. The enzyme catalyses Hydrolysis of terminal, non-reducing alpha-D-galactose residues in alpha-D-galactosides, including galactose oligosaccharides, galactomannans and galactolipids.. Alpha-galactosidase involved in the degradation of simple oligosaccharides like melibiose, raffinose and stachyose, and of polymeric galacto(gluco)mannans. The polypeptide is Alpha-galactosidase 2 (agl2) (Hypocrea jecorina (Trichoderma reesei)).